The sequence spans 287 residues: Putative holocytochrome-c1 synthase (287 aa).

The span at 1 to 12 shows a compositional bias: polar residues; the sequence is MRGFGSDSSQAS. 2 disordered regions span residues 1–63 and 81–100; these read MRGF…QPSS and QSQSANSTQQAQPPKLSAPL. 2 stretches are compositionally biased toward low complexity: residues 31–63 and 81–92; these read QARAAQSASTSAAPALPQSVQVAPASQPSQPSS and QSQSANSTQQAQ.

This sequence belongs to the cytochrome c-type heme lyase family.

Its subcellular location is the mitochondrion inner membrane. The enzyme catalyses holo-[cytochrome c] = apo-[cytochrome c] + heme b. In terms of biological role, probable lyase that catalyzes the covalent linking of the heme group to the cytochrome C apoprotein to produce the mature functional cytochrome. In Chaetomium thermophilum (strain DSM 1495 / CBS 144.50 / IMI 039719) (Thermochaetoides thermophila), this protein is Putative holocytochrome-c1 synthase.